The sequence spans 561 residues: Zinc finger protein 37A (561 aa).

In terms of domain architecture, KRAB spans 8-79 (VSFRDVTVGF…EEKFPSQSHL (72 aa)). Residues 146 to 168 (FEYNECGKAFPENSLFLVHKRGY) form a C2H2-type 1; degenerate zinc finger. The segment at 243-265 (IEYNECGTFFSEKLVLHLQQRTH) adopts a C2H2-type 2; degenerate zinc-finger fold. C2H2-type zinc fingers lie at residues 271–293 (YECHECGKTFTQKSAHTRHQRTH), 299–321 (YECHECGKTFYKNSDLIKHQRIH), 327–349 (YGCHECGKSFSEKSTLTQHQRTH), 355–377 (YECHECGKTFSFKSVLTVHQKTH), 383–405 (YECYACGKAFLRKSDLIKHQRIH), 411–433 (YECNECGKSFSEKSTLTKHLRTH), 439–461 (YECIQCGKFFCYYSGFTEHLRRH), 467–489 (FGCNECGKTFRQKSALIVHQRTH), 495–517 (YGCNQCGKSFCVKSKLIAHHRTH), and 523–545 (YECNVCGKSFYVKSKLTVHQRIH).

Belongs to the krueppel C2H2-type zinc-finger protein family.

The protein localises to the nucleus. Functionally, may be involved in transcriptional regulation. The sequence is that of Zinc finger protein 37A (ZNF37A) from Homo sapiens (Human).